Here is a 243-residue protein sequence, read N- to C-terminus: Ribonuclease 3 (243 aa).

The region spanning 15–144 (NDTISKIINY…LIGAIYIDGG (130 aa)) is the RNase III domain. Residue glutamate 57 coordinates Mg(2+). Residue aspartate 61 is part of the active site. 2 residues coordinate Mg(2+): asparagine 130 and glutamate 133. Residue glutamate 133 is part of the active site. The DRBM domain maps to 169-238 (DPKTSLQEWT…AELMLEKINN (70 aa)).

Belongs to the ribonuclease III family. As to quaternary structure, homodimer. It depends on Mg(2+) as a cofactor.

Its subcellular location is the cytoplasm. The catalysed reaction is Endonucleolytic cleavage to 5'-phosphomonoester.. In terms of biological role, digests double-stranded RNA. Involved in the processing of primary rRNA transcript to yield the immediate precursors to the large and small rRNAs (23S and 16S). Processes some mRNAs, and tRNAs when they are encoded in the rRNA operon. Processes pre-crRNA and tracrRNA of type II CRISPR loci if present in the organism. This chain is Ribonuclease 3, found in Wolbachia sp. subsp. Brugia malayi (strain TRS).